A 378-amino-acid polypeptide reads, in one-letter code: Protein RecA (378 aa).

65 to 72 (GPESSGKT) contributes to the ATP binding site. The tract at residues 325–378 (AYGMDQTGEEDDQADDKSKDKATKPSDKSQAQAKPKKPVATETSLDLDDSKTDK) is disordered. Residues 339–351 (DDKSKDKATKPSD) are compositionally biased toward basic and acidic residues.

It belongs to the RecA family.

The protein localises to the cytoplasm. Can catalyze the hydrolysis of ATP in the presence of single-stranded DNA, the ATP-dependent uptake of single-stranded DNA by duplex DNA, and the ATP-dependent hybridization of homologous single-stranded DNAs. It interacts with LexA causing its activation and leading to its autocatalytic cleavage. This chain is Protein RecA, found in Lactiplantibacillus pentosus (Lactobacillus pentosus).